Reading from the N-terminus, the 619-residue chain is Sorting nexin-41 (619 aa).

The tract at residues 1 to 95 (MWNDEDNNPY…ELVPRRKPGG (95 aa)) is disordered. Positions 108–224 (PELPILITEA…WRFLDPNSSW (117 aa)) constitute a PX domain. Arg-142, Ser-144, Lys-168, and Arg-191 together coordinate a 1,2-diacyl-sn-glycero-3-phospho-(1D-myo-inositol-3-phosphate). The tract at residues 444–510 (YLSSSQQIQP…GSPSHKKAAS (67 aa)) is disordered. Over residues 454–467 (PRREPPAQHRRDGS) the composition is skewed to basic and acidic residues.

This sequence belongs to the sorting nexin family.

It is found in the endosome membrane. It localises to the endomembrane system. Its function is as follows. May be required for cytoplasm to vacuole transport (Cvt) and pexophagy. This chain is Sorting nexin-41 (vsp-6), found in Neurospora crassa (strain ATCC 24698 / 74-OR23-1A / CBS 708.71 / DSM 1257 / FGSC 987).